The primary structure comprises 610 residues: Sterol O-acyltransferase 1 (610 aa).

Ser21 and Ser45 each carry phosphoserine. Residues Ser41–Tyr81 form a disordered region. The span at Glu67–Glu76 shows a compositional bias: basic and acidic residues. Transmembrane regions (helical) follow at residues Leu182 to Ile202, Leu229 to Val249, Gly264 to Val284, Ile371 to Tyr391, and Ile409 to Met429. Positions Phe491–Asn497 match the FYXDWWN motif motif. 2 helical membrane-spanning segments follow: residues Ala535 to Phe555 and Val590 to Leu610. His547 is an active-site residue.

This sequence belongs to the membrane-bound acyltransferase family. Sterol o-acyltransferase subfamily.

It localises to the endoplasmic reticulum membrane. The catalysed reaction is lanosterol + an acyl-CoA = lanosteryl ester + CoA. Functionally, sterol O-acyltransferase that catalyzes the formation of stery esters. The protein is Sterol O-acyltransferase 1 of Saccharomyces cerevisiae (strain ATCC 204508 / S288c) (Baker's yeast).